The primary structure comprises 285 residues: 33 kDa chaperonin (285 aa).

2 cysteine pairs are disulfide-bonded: cysteine 228–cysteine 230 and cysteine 261–cysteine 264.

Belongs to the HSP33 family. In terms of processing, under oxidizing conditions two disulfide bonds are formed involving the reactive cysteines. Under reducing conditions zinc is bound to the reactive cysteines and the protein is inactive.

The protein resides in the cytoplasm. In terms of biological role, redox regulated molecular chaperone. Protects both thermally unfolding and oxidatively damaged proteins from irreversible aggregation. Plays an important role in the bacterial defense system toward oxidative stress. This Hahella chejuensis (strain KCTC 2396) protein is 33 kDa chaperonin.